The chain runs to 332 residues: UDP-N-acetylenolpyruvoylglucosamine reductase (332 aa).

Residues 45 to 243 (RAGGHAAYFY…LGTRIKTQPL (199 aa)) enclose the FAD-binding PCMH-type domain. Residue Arg-194 is part of the active site. Ser-250 functions as the Proton donor in the catalytic mechanism. Glu-320 is a catalytic residue.

The protein belongs to the MurB family. Requires FAD as cofactor.

The protein localises to the cytoplasm. It catalyses the reaction UDP-N-acetyl-alpha-D-muramate + NADP(+) = UDP-N-acetyl-3-O-(1-carboxyvinyl)-alpha-D-glucosamine + NADPH + H(+). The protein operates within cell wall biogenesis; peptidoglycan biosynthesis. Functionally, cell wall formation. In Nitrosomonas eutropha (strain DSM 101675 / C91 / Nm57), this protein is UDP-N-acetylenolpyruvoylglucosamine reductase.